The chain runs to 400 residues: Lipase member N (400 aa).

A signal peptide spans 1–19 (MPMMWLFLTTACLIPGTLS). Positions 81-381 (PVVYMQHALF…DWNHFDFVWG (301 aa)) constitute an AB hydrolase-1 domain. Ser-175 serves as the catalytic Nucleophile. Cysteines 249 and 258 form a disulfide. Residue Asn-274 is glycosylated (N-linked (GlcNAc...) asparagine). Residues Asp-346 and His-375 each act as charge relay system in the active site.

It belongs to the AB hydrolase superfamily. Lipase family. Highly expressed in the epidermis. Also detected in other tissues, although at much lower levels, including liver and kidney.

It localises to the secreted. It catalyses the reaction a sterol ester + H2O = a sterol + a fatty acid + H(+). It carries out the reaction a triacylglycerol + H2O = a 1,2-diacylglycerol + a fatty acid + H(+). The enzyme catalyses a triacylglycerol + H2O = a diacylglycerol + a fatty acid + H(+). The catalysed reaction is a cholesterol ester + H2O = cholesterol + a fatty acid + H(+). Its function is as follows. Plays a highly specific role in the last step of keratinocyte differentiation. Contains two distinct domains: the alpha/beta hydrolase fold and the abhydrolase-associated lipase region, also features the consensus sequence of the active site of a genuine lipase. May have an essential function in lipid metabolism of the most differentiated epidermal layers. This chain is Lipase member N (Lipn), found in Mus musculus (Mouse).